We begin with the raw amino-acid sequence, 528 residues long: Aspartic proteinase-like protein 1 (528 aa).

An N-terminal signal peptide occupies residues 1–22 (MVSRSAFLLFCVLFLATEETLA). In terms of domain architecture, Peptidase A1 spans 100–449 (HYTWIDIGTP…DRENMKLGWS (350 aa)). Aspartate 118 is an active-site residue. Asparagine 193 and asparagine 217 each carry an N-linked (GlcNAc...) asparagine glycan. Aspartate 333 is a catalytic residue. N-linked (GlcNAc...) asparagine glycans are attached at residues asparagine 358 and asparagine 391. A disordered region spans residues 451–503 (SKCQEDKIEPPQASPGSTSSPNPLPTDEQQSRGGHAVSPAIAGKTPSKTPSSS). The span at 464 to 482 (SPGSTSSPNPLPTDEQQSR) shows a compositional bias: polar residues. Low complexity predominate over residues 494–503 (KTPSKTPSSS). Serine 503 carries the GPI-anchor amidated serine lipid modification. A propeptide spans 504-528 (SSYSFSSIMRLFNSLLLLHWLASLM) (removed in mature form).

It belongs to the peptidase A1 family.

It is found in the cell membrane. The protein is Aspartic proteinase-like protein 1 of Arabidopsis thaliana (Mouse-ear cress).